Here is a 273-residue protein sequence, read N- to C-terminus: Dermonecrotic toxin LdSicTox-alphaIB1av (273 aa).

His-5 is a catalytic residue. The Mg(2+) site is built by Glu-25 and Asp-27. Catalysis depends on His-41, which acts as the Nucleophile. Disulfide bonds link Cys-45–Cys-51 and Cys-47–Cys-190. Asp-85 is a binding site for Mg(2+). Asn-250 carries N-linked (GlcNAc...) asparagine glycosylation.

The protein belongs to the arthropod phospholipase D family. Class II subfamily. The cofactor is Mg(2+). As to expression, expressed by the venom gland.

The protein localises to the secreted. The enzyme catalyses an N-(acyl)-sphingosylphosphocholine = an N-(acyl)-sphingosyl-1,3-cyclic phosphate + choline. It catalyses the reaction an N-(acyl)-sphingosylphosphoethanolamine = an N-(acyl)-sphingosyl-1,3-cyclic phosphate + ethanolamine. The catalysed reaction is a 1-acyl-sn-glycero-3-phosphocholine = a 1-acyl-sn-glycero-2,3-cyclic phosphate + choline. It carries out the reaction a 1-acyl-sn-glycero-3-phosphoethanolamine = a 1-acyl-sn-glycero-2,3-cyclic phosphate + ethanolamine. Functionally, dermonecrotic toxins cleave the phosphodiester linkage between the phosphate and headgroup of certain phospholipids (sphingolipid and lysolipid substrates), forming an alcohol (often choline) and a cyclic phosphate. This toxin acts on sphingomyelin (SM). It may also act on ceramide phosphoethanolamine (CPE), lysophosphatidylcholine (LPC) and lysophosphatidylethanolamine (LPE), but not on lysophosphatidylserine (LPS), and lysophosphatidylglycerol (LPG). It acts by transphosphatidylation, releasing exclusively cyclic phosphate products as second products. Induces dermonecrosis, hemolysis, increased vascular permeability, edema, inflammatory response, and platelet aggregation. This chain is Dermonecrotic toxin LdSicTox-alphaIB1av, found in Loxosceles deserta (Desert recluse spider).